The following is a 637-amino-acid chain: Glutathione hydrolase 3 (637 aa).

A helical transmembrane segment spans residues 28 to 48 (LKISLLLLLILLATSGYYSFS). Asn50 carries N-linked (GlcNAc...) asparagine glycosylation. Arg147 provides a ligand contact to L-glutamate. Asn271, Asn374, and Asn398 each carry an N-linked (GlcNAc...) asparagine glycan. The active-site Nucleophile is Thr418. L-glutamate-binding positions include Thr436, Asn438, Glu457, Asp460, 488–489 (SS), and 509–510 (GG). An N-linked (GlcNAc...) asparagine glycan is attached at Asn553.

Belongs to the gamma-glutamyltransferase family. In terms of tissue distribution, expressed in roots, cotyledons, leaves, flowers and siliques.

The protein localises to the vacuole membrane. The enzyme catalyses an N-terminal (5-L-glutamyl)-[peptide] + an alpha-amino acid = 5-L-glutamyl amino acid + an N-terminal L-alpha-aminoacyl-[peptide]. The catalysed reaction is glutathione + H2O = L-cysteinylglycine + L-glutamate. It carries out the reaction an S-substituted glutathione + H2O = an S-substituted L-cysteinylglycine + L-glutamate. The protein operates within sulfur metabolism; glutathione metabolism. May play a role in protecting plants from some xenobiotic chemicals by degrading vacuolar glutathione conjugates into cysteine conjugates. This chain is Glutathione hydrolase 3 (GGT3), found in Arabidopsis thaliana (Mouse-ear cress).